The chain runs to 182 residues: Nascent polypeptide-associated complex subunit alpha (182 aa).

One can recognise an NAC-A/B domain in the interval 17-81 (NKNEKKAKEL…AKVDDMNQRI (65 aa)). Residues 120 to 148 (ASLQGGESNADAAEDDNEEVDETGINPKD) form a disordered region. A compositionally biased stretch (acidic residues) spans 131–141 (AAEDDNEEVDE). In terms of domain architecture, UBA spans 144–182 (INPKDIDLIVEQTRVSRGSAVKALKKHDGDMVNALMELS).

This sequence belongs to the NAC-alpha family. Part of the nascent polypeptide-associated complex (NAC), consisting of EGD2 and EGD1. NAC associates with ribosomes via EGD1.

The protein localises to the cytoplasm. It is found in the nucleus. Functionally, component of the nascent polypeptide-associated complex (NAC), a dynamic component of the ribosomal exit tunnel, protecting the emerging polypeptides from interaction with other cytoplasmic proteins to ensure appropriate nascent protein targeting. The NAC complex also promotes mitochondrial protein import by enhancing productive ribosome interactions with the outer mitochondrial membrane and blocks the inappropriate interaction of ribosomes translating non-secretory nascent polypeptides with translocation sites in the membrane of the endoplasmic reticulum. EGD2 may also be involved in transcription regulation. The polypeptide is Nascent polypeptide-associated complex subunit alpha (EGD2) (Lodderomyces elongisporus (strain ATCC 11503 / CBS 2605 / JCM 1781 / NBRC 1676 / NRRL YB-4239) (Yeast)).